The following is a 195-amino-acid chain: UPF0316 protein Pcar_2434 (195 aa).

Helical transmembrane passes span 13–33, 45–65, and 71–91; these read LFLL…IGTL, WAGV…SQVM, and VWTY…GVLI.

Belongs to the UPF0316 family.

The protein resides in the cell membrane. The polypeptide is UPF0316 protein Pcar_2434 (Syntrophotalea carbinolica (strain DSM 2380 / NBRC 103641 / GraBd1) (Pelobacter carbinolicus)).